The sequence spans 468 residues: 6-phospho-beta-galactosidase (468 aa).

D-galactose 6-phosphate is bound by residues Gln19, His116, Asn159, Glu160, and Asn297. The active-site Proton donor is the Glu160. Residue Glu375 is the Nucleophile of the active site. Residues Ser428, Trp429, Lys435, and Tyr437 each contribute to the D-galactose 6-phosphate site.

Belongs to the glycosyl hydrolase 1 family.

It carries out the reaction a 6-phospho-beta-D-galactoside + H2O = D-galactose 6-phosphate + an alcohol. It participates in carbohydrate metabolism; lactose degradation; D-galactose 6-phosphate and beta-D-glucose from lactose 6-phosphate: step 1/1. This chain is 6-phospho-beta-galactosidase, found in Streptococcus pyogenes serotype M5 (strain Manfredo).